The chain runs to 241 residues: NAD-dependent protein deacetylase 2 (241 aa).

Residues 1–241 (MTGKPLVAIL…ALPALLRGLG (241 aa)) enclose the Deacetylase sirtuin-type domain. NAD(+) is bound by residues alanine 13, threonine 17, arginine 25, glutamine 92, valine 94, aspartate 95, and histidine 112. Positions 94 and 95 each coordinate nicotinamide. Histidine 112 functions as the Proton acceptor in the catalytic mechanism. The Zn(2+) site is built by cysteine 120, cysteine 123, cysteine 145, and cysteine 148. Residues threonine 186, serine 187, asparagine 211, and isoleucine 229 each contribute to the NAD(+) site.

The protein belongs to the sirtuin family. Class U subfamily. The cofactor is Zn(2+).

The protein localises to the cytoplasm. The catalysed reaction is N(6)-acetyl-L-lysyl-[protein] + NAD(+) + H2O = 2''-O-acetyl-ADP-D-ribose + nicotinamide + L-lysyl-[protein]. NAD-dependent protein deacetylase which modulates the activities of several enzymes which are inactive in their acetylated form. The protein is NAD-dependent protein deacetylase 2 of Streptomyces coelicolor (strain ATCC BAA-471 / A3(2) / M145).